Consider the following 270-residue polypeptide: 3-phenylpropionate-dihydrodiol/cinnamic acid-dihydrodiol dehydrogenase (270 aa).

10–34 (FITGGGSGLGLALVERFIEEGAQVA) contacts NAD(+). A substrate-binding site is contributed by serine 143. Tyrosine 156 serves as the catalytic Proton acceptor.

The protein belongs to the short-chain dehydrogenases/reductases (SDR) family.

The catalysed reaction is 3-(cis-5,6-dihydroxycyclohexa-1,3-dien-1-yl)propanoate + NAD(+) = 3-(2,3-dihydroxyphenyl)propanoate + NADH + H(+). The enzyme catalyses (2E)-3-(cis-5,6-dihydroxycyclohexa-1,3-dien-1-yl)prop-2-enoate + NAD(+) = (2E)-3-(2,3-dihydroxyphenyl)prop-2-enoate + NADH + H(+). It functions in the pathway aromatic compound metabolism; 3-phenylpropanoate degradation. In terms of biological role, converts 3-phenylpropionate-dihydrodiol (PP-dihydrodiol) and cinnamic acid-dihydrodiol (CI-dihydrodiol) into 3-(2,3-dihydroxylphenyl)propanoic acid (DHPP) and 2,3-dihydroxicinnamic acid (DHCI), respectively. The sequence is that of 3-phenylpropionate-dihydrodiol/cinnamic acid-dihydrodiol dehydrogenase from Escherichia coli (strain SMS-3-5 / SECEC).